The sequence spans 265 residues: Adenosine 5'-phosphosulfate reductase (265 aa).

The [4Fe-4S] cluster site is built by C135, C136, C218, and C221. C246 (nucleophile; cysteine thiosulfonate intermediate) is an active-site residue.

The protein belongs to the PAPS reductase family. CysH subfamily. It depends on [4Fe-4S] cluster as a cofactor.

The protein resides in the cytoplasm. It carries out the reaction [thioredoxin]-disulfide + sulfite + AMP + 2 H(+) = adenosine 5'-phosphosulfate + [thioredoxin]-dithiol. The protein operates within sulfur metabolism; hydrogen sulfide biosynthesis; sulfite from sulfate. In terms of biological role, catalyzes the formation of sulfite from adenosine 5'-phosphosulfate (APS) using thioredoxin as an electron donor. The protein is Adenosine 5'-phosphosulfate reductase of Rhizobium meliloti (strain 1021) (Ensifer meliloti).